The chain runs to 509 residues: tRNA-2-methylthio-N(6)-dimethylallyladenosine synthase (509 aa).

Over residues 1–15 (MNEQQRLASRQANSS) the composition is skewed to polar residues. Residues 1–25 (MNEQQRLASRQANSSTKKEEKDYSK) form a disordered region. Basic and acidic residues predominate over residues 16–25 (TKKEEKDYSK). Positions 66–184 (RKFYIRTYGC…LPYILKDAMF (119 aa)) constitute an MTTase N-terminal domain. Positions 75, 111, 145, 221, 225, and 228 each coordinate [4Fe-4S] cluster. Residues 207–437 (RRGDIKAWVN…NTLVNEYGVN (231 aa)) enclose the Radical SAM core domain. Positions 440-503 (KRYIGQIVEV…TWSLNGELVK (64 aa)) constitute a TRAM domain.

It belongs to the methylthiotransferase family. MiaB subfamily. Monomer. [4Fe-4S] cluster serves as cofactor.

It localises to the cytoplasm. The enzyme catalyses N(6)-dimethylallyladenosine(37) in tRNA + (sulfur carrier)-SH + AH2 + 2 S-adenosyl-L-methionine = 2-methylsulfanyl-N(6)-dimethylallyladenosine(37) in tRNA + (sulfur carrier)-H + 5'-deoxyadenosine + L-methionine + A + S-adenosyl-L-homocysteine + 2 H(+). In terms of biological role, catalyzes the methylthiolation of N6-(dimethylallyl)adenosine (i(6)A), leading to the formation of 2-methylthio-N6-(dimethylallyl)adenosine (ms(2)i(6)A) at position 37 in tRNAs that read codons beginning with uridine. The chain is tRNA-2-methylthio-N(6)-dimethylallyladenosine synthase from Bacillus mycoides (strain KBAB4) (Bacillus weihenstephanensis).